We begin with the raw amino-acid sequence, 85 residues long: Conotoxin Mi15a (85 aa).

Residues 1-23 (MEKLTVLILVATVLLTIQVLGQS) form the signal peptide. Residues 24–49 (DRDKHLKRRPKQYATKRLSARMRGHR) constitute a propeptide that is removed on maturation. At glutamine 50 the chain carries Pyrrolidone carboxylic acid.

It belongs to the conotoxin O2 superfamily. In terms of processing, contains 4 disulfide bonds. As to expression, expressed by the venom duct.

It is found in the secreted. The protein is Conotoxin Mi15a of Conus miles (Soldier cone).